An 84-amino-acid chain; its full sequence is RQC P-site tRNA stabilizing factor (84 aa).

Positions 1–64 constitute an S4 RNA-binding domain; that stretch reads MRIDKFLQSV…IEEYTILQIP (64 aa).

Belongs to the RqcP family. As to quaternary structure, associates with stalled 50S ribosomal subunits. Binds to RqcH, 23S rRNA and the P-site tRNA. Does not require RqcH for association with 50S subunits.

Key component of the ribosome quality control system (RQC), a ribosome-associated complex that mediates the extraction of incompletely synthesized nascent chains from stalled ribosomes and their subsequent degradation. RqcH recruits Ala-charged tRNA, and with RqcP directs the elongation of stalled nascent chains on 50S ribosomal subunits, leading to non-templated C-terminal alanine extensions (Ala tail). The Ala tail promotes nascent chain degradation. RqcP is associated with the translocation-like movement of the peptidyl-tRNA from the A-site into the P-site. In Helicobacter pylori (strain ATCC 700392 / 26695) (Campylobacter pylori), this protein is RQC P-site tRNA stabilizing factor.